A 322-amino-acid polypeptide reads, in one-letter code: tRNA U34 carboxymethyltransferase (322 aa).

Carboxy-S-adenosyl-L-methionine-binding positions include Lys91, Trp105, Lys110, Gly129, 179–180 (LE), Met195, Tyr199, and Arg314.

This sequence belongs to the class I-like SAM-binding methyltransferase superfamily. CmoB family. In terms of assembly, homotetramer.

It catalyses the reaction carboxy-S-adenosyl-L-methionine + 5-hydroxyuridine(34) in tRNA = 5-carboxymethoxyuridine(34) in tRNA + S-adenosyl-L-homocysteine + H(+). In terms of biological role, catalyzes carboxymethyl transfer from carboxy-S-adenosyl-L-methionine (Cx-SAM) to 5-hydroxyuridine (ho5U) to form 5-carboxymethoxyuridine (cmo5U) at position 34 in tRNAs. The chain is tRNA U34 carboxymethyltransferase from Pseudomonas aeruginosa (strain ATCC 15692 / DSM 22644 / CIP 104116 / JCM 14847 / LMG 12228 / 1C / PRS 101 / PAO1).